The following is a 259-amino-acid chain: Enolase-phosphatase E1 (259 aa).

Mg(2+)-binding residues include Asp16 and Glu18. Residues 151–152 (SS) and Lys185 each bind substrate. Residue Asp210 participates in Mg(2+) binding.

Belongs to the HAD-like hydrolase superfamily. MasA/MtnC family. As to quaternary structure, monomer. Mg(2+) serves as cofactor.

It is found in the cytoplasm. The protein localises to the nucleus. It carries out the reaction 5-methylsulfanyl-2,3-dioxopentyl phosphate + H2O = 1,2-dihydroxy-5-(methylsulfanyl)pent-1-en-3-one + phosphate. The protein operates within amino-acid biosynthesis; L-methionine biosynthesis via salvage pathway; L-methionine from S-methyl-5-thio-alpha-D-ribose 1-phosphate: step 3/6. Its pathway is amino-acid biosynthesis; L-methionine biosynthesis via salvage pathway; L-methionine from S-methyl-5-thio-alpha-D-ribose 1-phosphate: step 4/6. Its function is as follows. Bifunctional enzyme that catalyzes the enolization of 2,3-diketo-5-methylthiopentyl-1-phosphate (DK-MTP-1-P) into the intermediate 2-hydroxy-3-keto-5-methylthiopentenyl-1-phosphate (HK-MTPenyl-1-P), which is then dephosphorylated to form the acireductone 1,2-dihydroxy-3-keto-5-methylthiopentene (DHK-MTPene). The protein is Enolase-phosphatase E1 (enoph1) of Xenopus tropicalis (Western clawed frog).